Reading from the N-terminus, the 224-residue chain is NADH-quinone oxidoreductase subunit B (224 aa).

Residues C67, C68, C133, and C162 each coordinate [4Fe-4S] cluster. Residues 200–224 (DMPAEKDRKRGERIKVTNLRTPDEI) form a disordered region. Basic and acidic residues predominate over residues 201 to 224 (MPAEKDRKRGERIKVTNLRTPDEI).

This sequence belongs to the complex I 20 kDa subunit family. NDH-1 is composed of 14 different subunits. Subunits NuoB, C, D, E, F, and G constitute the peripheral sector of the complex. It depends on [4Fe-4S] cluster as a cofactor.

It is found in the cell inner membrane. It carries out the reaction a quinone + NADH + 5 H(+)(in) = a quinol + NAD(+) + 4 H(+)(out). Functionally, NDH-1 shuttles electrons from NADH, via FMN and iron-sulfur (Fe-S) centers, to quinones in the respiratory chain. The immediate electron acceptor for the enzyme in this species is believed to be ubiquinone. Couples the redox reaction to proton translocation (for every two electrons transferred, four hydrogen ions are translocated across the cytoplasmic membrane), and thus conserves the redox energy in a proton gradient. The chain is NADH-quinone oxidoreductase subunit B from Aeromonas salmonicida (strain A449).